Consider the following 314-residue polypeptide: Ornithine carbamoyltransferase (314 aa).

Carbamoyl phosphate contacts are provided by residues 61 to 64, glutamine 88, arginine 112, and 139 to 142; these read STRT and HPCQ. L-ornithine-binding positions include asparagine 170, aspartate 234, and 238 to 239; that span reads SM. Residues 274–275 and arginine 302 contribute to the carbamoyl phosphate site; that span reads CL.

It belongs to the aspartate/ornithine carbamoyltransferase superfamily. OTCase family.

It localises to the cytoplasm. The enzyme catalyses carbamoyl phosphate + L-ornithine = L-citrulline + phosphate + H(+). It participates in amino-acid biosynthesis; L-arginine biosynthesis; L-arginine from L-ornithine and carbamoyl phosphate: step 1/3. Functionally, reversibly catalyzes the transfer of the carbamoyl group from carbamoyl phosphate (CP) to the N(epsilon) atom of ornithine (ORN) to produce L-citrulline. In Anoxybacillus flavithermus (strain DSM 21510 / WK1), this protein is Ornithine carbamoyltransferase.